A 163-amino-acid chain; its full sequence is Large ribosomal subunit protein uL15 (163 aa).

Residues 1–29 (MSKKRRQRGSRTHGGGSHKNRRGAGHRGG) are compositionally biased toward basic residues. Disordered regions lie at residues 1-59 (MSKK…KTRR) and 135-163 (VADG…DEES). Composition is skewed to basic and acidic residues over residues 33 to 46 (AGRD…HEPL) and 142 to 154 (LSER…AEKD).

It belongs to the universal ribosomal protein uL15 family. In terms of assembly, part of the 50S ribosomal subunit.

Functionally, binds to the 23S rRNA. In Natronomonas pharaonis (strain ATCC 35678 / DSM 2160 / CIP 103997 / JCM 8858 / NBRC 14720 / NCIMB 2260 / Gabara) (Halobacterium pharaonis), this protein is Large ribosomal subunit protein uL15.